Consider the following 330-residue polypeptide: Trans-1,2-dihydrobenzene-1,2-diol dehydrogenase (330 aa).

It belongs to the Gfo/Idh/MocA family. Homodimer.

The enzyme catalyses (1R,2R)-1,2-dihydrobenzene-1,2-diol + NADP(+) = catechol + NADPH + H(+). The catalysed reaction is D-xylose + NADP(+) = D-xylono-1,5-lactone + NADPH + H(+). This Xenopus tropicalis (Western clawed frog) protein is Trans-1,2-dihydrobenzene-1,2-diol dehydrogenase (dhdh).